We begin with the raw amino-acid sequence, 120 residues long: U13-lycotoxin-Ls1a (120 aa).

Residues methionine 1–cysteine 16 form the signal peptide. Residues phenylalanine 17–arginine 54 constitute a propeptide that is removed on maturation. 4 disulfide bridges follow: cysteine 56–cysteine 70, cysteine 63–cysteine 76, cysteine 69–cysteine 87, and cysteine 78–cysteine 85. The Agouti domain occupies cysteine 56–cysteine 95.

This sequence belongs to the neurotoxin 05 (agouti) family. Contains 6 disulfide bonds. In terms of tissue distribution, expressed by the venom gland.

The protein resides in the secreted. This is U13-lycotoxin-Ls1a from Lycosa singoriensis (Wolf spider).